The following is a 115-amino-acid chain: Large ribosomal subunit protein bL19 (115 aa).

Belongs to the bacterial ribosomal protein bL19 family.

This protein is located at the 30S-50S ribosomal subunit interface and may play a role in the structure and function of the aminoacyl-tRNA binding site. In Francisella philomiragia subsp. philomiragia (strain ATCC 25017 / CCUG 19701 / FSC 153 / O#319-036), this protein is Large ribosomal subunit protein bL19.